A 596-amino-acid polypeptide reads, in one-letter code: Meiosis-specific protein ASY1 (596 aa).

The HORMA domain occupies 15-228 (QDSLLLTRNL…SKHLVLTLKV (214 aa)). The disordered stretch occupies residues 235-303 (CEDENDDMQD…NTQDPAENEQ (69 aa)). Over residues 282-295 (QDDDDGEVDEDDNT) the composition is skewed to acidic residues. Residues 351–449 (SKTGKDMYIK…ASSNRRLGKR (99 aa)) enclose the SWIRM domain. Residues 562–596 (TVNCSQASQDRRGRKTSMVREPILQYSKRQKSQAN) form a disordered region.

Interacts with ASY3.

It localises to the chromosome. Its subcellular location is the nucleus. Functionally, required for normal meiosis in male and female gametophytes. Plays a crucial role in coordinating the activity of DMC1, a key member of the homologous recombination machinery. Acts at the interface between the developing chromosome axes and the recombination machinery to ensure DMC1-mediated interhomolog recombination. In Arabidopsis thaliana (Mouse-ear cress), this protein is Meiosis-specific protein ASY1.